A 496-amino-acid chain; its full sequence is Alanine aminotransferase 1 (496 aa).

Alanine 2 bears the N-acetylalanine mark. Threonine 22 bears the Phosphothreonine mark. Lysine 314 carries the N6-(pyridoxal phosphate)lysine modification.

It belongs to the class-I pyridoxal-phosphate-dependent aminotransferase family. Alanine aminotransferase subfamily. In terms of assembly, homodimer. Pyridoxal 5'-phosphate is required as a cofactor. Liver, kidney, heart, and skeletal muscles. Expressed at moderate levels in the adipose tissue.

The protein localises to the cytoplasm. The enzyme catalyses L-alanine + 2-oxoglutarate = pyruvate + L-glutamate. It participates in amino-acid degradation; L-alanine degradation via transaminase pathway; pyruvate from L-alanine: step 1/1. In terms of biological role, catalyzes the reversible transamination between alanine and 2-oxoglutarate to form pyruvate and glutamate. Participates in cellular nitrogen metabolism and also in liver gluconeogenesis starting with precursors transported from skeletal muscles. The sequence is that of Alanine aminotransferase 1 (GPT) from Homo sapiens (Human).